We begin with the raw amino-acid sequence, 146 residues long: MSVAEIFERVDKNKDGKISWDEFAEAIRAFSPSITSEEIDNMFREIDVDGDNQIDVAEYASCLMLGGEGNKEDEDIVMKEAFDLYDIDGDGKISASEIHVVLKRLGEKQTIAECIAMVRAVDADGDGFVSFEEFKTMMSCNNKKLQ.

EF-hand domains follow at residues 1–33, 34–69, 73–108, and 109–144; these read MSVA…FSPS, ITSE…GGEG, DEDI…LGEK, and QTIA…NNKK. Residues Asp-11, Asn-13, Asp-15, Lys-17, Glu-22, Asp-47, Asp-49, Asp-51, Gln-53, Glu-58, Asp-86, Asp-88, Asp-90, Lys-92, Glu-97, Asp-122, Asp-124, Asp-126, and Glu-133 each coordinate Ca(2+).

Potential calcium sensor. This is Probable calcium-binding protein CML32 (CML32) from Arabidopsis thaliana (Mouse-ear cress).